Here is a 478-residue protein sequence, read N- to C-terminus: MALAPHSNFLANHETIKYYVGSKLPGHKRFSWGWEDYFGSIVVAKICSSRRIPRYFRKSPRICCGLDSRGLQLFSHGKHNLSPAHSINQNVPKGNSGCKFPKDVALMVWEKWGQFAKTAIVAIFILSVASKADAVDALKTCTCLLKECRLELAKCISNPACAANVACLQTCNNRPDETECQIKCGDLFENSVVDEFNECAVSRKKCVPRKSDVGDFPVPDPSVLVQKFDMKDFSGKWFITRGLNPTFDAFDCQLHEFHTEENKLVGNLSWRIRTPDGGFFTRSAVQKFVQDPKYPGILYNHDNEYLLYQDDWYILSSKVENSPEDYIFVYYKGRNDAWDGYGGSVLYTRSAVLPESIIPELQTAAQKVGRDFNTFIKTDNTCGPEPPLVERLEKKVEEGERTIIKEVEEIEEEVEKVRDKEVTLFSKLFEGFKELQRDEENFLRELSKEEMDVLDGLKMEATEVEKLFGRALPIRKLR.

Residues 388–453 are a coiled coil; sequence LVERLEKKVE…RELSKEEMDV (66 aa).

It belongs to the calycin superfamily. Lipocalin family.

Its subcellular location is the plastid. It is found in the chloroplast thylakoid membrane. The enzyme catalyses all-trans-violaxanthin + 2 L-ascorbate = all-trans-zeaxanthin + 2 L-dehydroascorbate + 2 H2O. Functionally, part of the xanthophyll (or violaxanthin) cycle for controlling the concentration of zeaxanthin in chloroplasts. Catalyzes the two-step mono de-epoxidation reaction. Stereospecific for all-trans xanthophylls. Zeaxanthin induces the dissipation of excitation energy in the chlorophyll of the light-harvesting protein complex of photosystem II. This Nicotiana tabacum (Common tobacco) protein is Violaxanthin de-epoxidase, chloroplastic (VDE1).